We begin with the raw amino-acid sequence, 190 residues long: UPF0232 protein SCO3875 (190 aa).

Disordered regions lie at residues 1 to 70 and 163 to 190; these read MSAD…GRDP and GPGG…DTYG. The span at 26–35 shows a compositional bias: low complexity; the sequence is GVDLARVALR. Over residues 36–45 the composition is skewed to basic and acidic residues; sequence AAREAARARG. Over residues 163–172 the composition is skewed to gly residues; the sequence is GPGGPGGPGR.

The protein belongs to the UPF0232 family.

In Streptomyces coelicolor (strain ATCC BAA-471 / A3(2) / M145), this protein is UPF0232 protein SCO3875.